Reading from the N-terminus, the 189-residue chain is Peptidyl-tRNA hydrolase (189 aa).

Position 15 (Y15) interacts with tRNA. H20 acts as the Proton acceptor in catalysis. TRNA-binding residues include Y65, N67, and N113.

Belongs to the PTH family. In terms of assembly, monomer.

The protein resides in the cytoplasm. It carries out the reaction an N-acyl-L-alpha-aminoacyl-tRNA + H2O = an N-acyl-L-amino acid + a tRNA + H(+). In terms of biological role, hydrolyzes ribosome-free peptidyl-tRNAs (with 1 or more amino acids incorporated), which drop off the ribosome during protein synthesis, or as a result of ribosome stalling. Catalyzes the release of premature peptidyl moieties from peptidyl-tRNA molecules trapped in stalled 50S ribosomal subunits, and thus maintains levels of free tRNAs and 50S ribosomes. This is Peptidyl-tRNA hydrolase from Caldicellulosiruptor saccharolyticus (strain ATCC 43494 / DSM 8903 / Tp8T 6331).